The chain runs to 205 residues: Large ribosomal subunit protein bL25 (205 aa).

The tract at residues 184 to 205 is disordered; the sequence is QPAGAVSEAAEGGEAAGETPAA. A compositionally biased stretch (low complexity) spans 186 to 205; that stretch reads AGAVSEAAEGGEAAGETPAA.

This sequence belongs to the bacterial ribosomal protein bL25 family. CTC subfamily. As to quaternary structure, part of the 50S ribosomal subunit; part of the 5S rRNA/L5/L18/L25 subcomplex. Contacts the 5S rRNA. Binds to the 5S rRNA independently of L5 and L18.

Its function is as follows. This is one of the proteins that binds to the 5S RNA in the ribosome where it forms part of the central protuberance. The chain is Large ribosomal subunit protein bL25 from Cupriavidus necator (strain ATCC 17699 / DSM 428 / KCTC 22496 / NCIMB 10442 / H16 / Stanier 337) (Ralstonia eutropha).